The sequence spans 440 residues: Fibulin-7 (440 aa).

The N-terminal stretch at 1–24 (MGPGSQRALFLLLLLLASPGARAF) is a signal peptide. Residues 28 to 73 (LNKQQLLTTIRQLQQLLKGQETRFTEGIRNMKSRLAALQNTVNKMT) are a coiled coil. A Sushi domain is found at 79–136 (VSCPALEAPPDGKKFGSKYLVDHEVYFTCNPGFQLVGPSSVVCLANGSWTGEQPRCRD). Disulfide bonds link Cys-81–Cys-121, Cys-107–Cys-134, Cys-140–Cys-151, Cys-145–Cys-160, Cys-162–Cys-171, Cys-229–Cys-245, Cys-241–Cys-254, Cys-256–Cys-269, Cys-275–Cys-288, Cys-282–Cys-297, and Cys-302–Cys-319. Asn-124 carries an N-linked (GlcNAc...) asparagine glycan. The 37-residue stretch at 136–172 (DISECSSQPCHNGGTCVEGINHYRCICPPGKTGNRCQ) folds into the EGF-like 1; calcium-binding domain. The 46-residue stretch at 225–270 (DVNECEIYGQKGRPRLCMHACVNTPGSYRCTCPSGYRILADGKSCE) folds into the EGF-like 2; calcium-binding domain. Residues 271 to 320 (DVDECAGPQHMCPRGTTCINTGGGFQCVNPECPEGSGNISYVKTSPFQCE) enclose the EGF-like 3; calcium-binding domain. Residue Asn-308 is glycosylated (N-linked (GlcNAc...) asparagine).

This sequence belongs to the fibulin family. In terms of assembly, interacts with heparin, FBLN1, FN1 and DSPP. Preferentially binds dental mesenchyme cells and odontoblasts but not dental epithelial cells or nondental cells. Binding requires a heparan sulfate-containing receptor on the cell surface as well as an integrin. In terms of processing, N-glycosylated. As to expression, highly expressed in newborn incisors and molars. A weaker expression is seen in the brain, kidneys, muscles and bones.

It localises to the secreted. Its subcellular location is the extracellular space. The protein localises to the extracellular matrix. In terms of biological role, an adhesion molecule that interacts with extracellular matrix molecules in developing teeth and may play important roles in differentiation and maintenance of odontoblasts as well as in dentin formation. This Mus musculus (Mouse) protein is Fibulin-7 (Fbln7).